Here is a 345-residue protein sequence, read N- to C-terminus: GTPase Obg (345 aa).

Residues 1 to 158 (MFIDSVKITL…RLVRLELKLI (158 aa)) form the Obg domain. Positions 159-339 (ADVGLVGFPN…LKFMLLEEIK (181 aa)) constitute an OBG-type G domain. Residues 165-172 (GFPNVGKS), 190-194 (FTTLT), 212-215 (DIPG), 280-283 (SKSD), and 320-322 (SSL) each bind GTP. Ser172 and Thr192 together coordinate Mg(2+).

Belongs to the TRAFAC class OBG-HflX-like GTPase superfamily. OBG GTPase family. In terms of assembly, monomer. It depends on Mg(2+) as a cofactor.

The protein resides in the cytoplasm. Its function is as follows. An essential GTPase which binds GTP, GDP and possibly (p)ppGpp with moderate affinity, with high nucleotide exchange rates and a fairly low GTP hydrolysis rate. Plays a role in control of the cell cycle, stress response, ribosome biogenesis and in those bacteria that undergo differentiation, in morphogenesis control. This chain is GTPase Obg, found in Campylobacter jejuni subsp. jejuni serotype O:6 (strain 81116 / NCTC 11828).